The primary structure comprises 350 residues: Pro-cathepsin H (350 aa).

An N-terminal signal peptide occupies residues 1–19; that stretch reads MAQWTLLIVFFCVATAAAG. Positions 20–113 are cleaved as a propeptide — activation peptide; it reads LSFHDSNPIR…WEEFRSHRLG (94 aa). Residue N117 is glycosylated (N-linked (GlcNAc...) asparagine). The propeptide at 122–132 is removed in mature form; it reads LKGNHRITDVV. 2 cysteine pairs are disulfide-bonded: C154-C197 and C188-C230. C157 is an active-site residue. N177 carries an N-linked (GlcNAc...) asparagine glycan. N246 is a glycosylation site (N-linked (GlcNAc...) asparagine). The cysteines at positions 288 and 338 are disulfide-linked. Residues H297 and N317 contribute to the active site.

It belongs to the peptidase C1 family. Interacts with KPI104 and KPI106. Composed of a mini chain and a large chain. The large chain may be split into heavy and light chain. All chains are held together by disulfide bonds.

It is found in the vacuole. The protein localises to the lysosome. It carries out the reaction Hydrolysis of proteins, acting as an aminopeptidase (notably, cleaving Arg-|-Xaa bonds) as well as an endopeptidase.. In terms of biological role, may play a role in proteolysis leading to mobilization of nitrogen during senescence and starvation. The protein is Pro-cathepsin H of Medicago truncatula (Barrel medic).